The following is a 460-amino-acid chain: Cysteine--tRNA ligase (460 aa).

A Zn(2+)-binding site is contributed by cysteine 28. The 'HIGH' region motif lies at 30 to 40 (MTVYDYCHLGH). Positions 209, 234, and 238 each coordinate Zn(2+). The 'KMSKS' region motif lies at 266-270 (KMSKS). Lysine 269 serves as a coordination point for ATP.

Belongs to the class-I aminoacyl-tRNA synthetase family. In terms of assembly, monomer. It depends on Zn(2+) as a cofactor.

The protein resides in the cytoplasm. It carries out the reaction tRNA(Cys) + L-cysteine + ATP = L-cysteinyl-tRNA(Cys) + AMP + diphosphate. The polypeptide is Cysteine--tRNA ligase (Pseudomonas syringae pv. syringae (strain B728a)).